The primary structure comprises 340 residues: Eukaryotic translation initiation factor 3 subunit I (340 aa).

5 WD repeats span residues 8–47 (GHER…RLGT), 50–91 (GHQG…KVWD), 150–189 (CTES…QLEN), 194–233 (EFDH…ILKT), and 291–330 (GHFG…FDFM).

It belongs to the eIF-3 subunit I family. As to quaternary structure, component of the eukaryotic translation initiation factor 3 (eIF-3) complex.

It is found in the cytoplasm. Functionally, component of the eukaryotic translation initiation factor 3 (eIF-3) complex, which is involved in protein synthesis of a specialized repertoire of mRNAs and, together with other initiation factors, stimulates binding of mRNA and methionyl-tRNAi to the 40S ribosome. The eIF-3 complex specifically targets and initiates translation of a subset of mRNAs involved in cell proliferation. The protein is Eukaryotic translation initiation factor 3 subunit I (tif34) of Aspergillus fumigatus (strain CBS 144.89 / FGSC A1163 / CEA10) (Neosartorya fumigata).